We begin with the raw amino-acid sequence, 390 residues long: NADH-quinone oxidoreductase subunit D (390 aa).

The protein belongs to the complex I 49 kDa subunit family. NDH-1 is composed of 14 different subunits. Subunits NuoB, C, D, E, F, and G constitute the peripheral sector of the complex.

It localises to the cell membrane. It carries out the reaction a quinone + NADH + 5 H(+)(in) = a quinol + NAD(+) + 4 H(+)(out). NDH-1 shuttles electrons from NADH, via FMN and iron-sulfur (Fe-S) centers, to quinones in the respiratory chain. The immediate electron acceptor for the enzyme in this species is believed to be ubiquinone. Couples the redox reaction to proton translocation (for every two electrons transferred, four hydrogen ions are translocated across the cytoplasmic membrane), and thus conserves the redox energy in a proton gradient. This Wolbachia pipientis subsp. Culex pipiens (strain wPip) protein is NADH-quinone oxidoreductase subunit D.